The following is a 439-amino-acid chain: Transcriptional enhancer factor TEF-5 (439 aa).

The span at Met-1–Pro-12 shows a compositional bias: polar residues. Residues Met-1–Val-34 are disordered. At Ala-2 the chain carries N-acetylalanine. The span at Glu-14–Asp-28 shows a compositional bias: basic and acidic residues. Positions Asp-28–Glu-104 form a DNA-binding region, TEA. Ser-148 is modified (phosphoserine). The segment at Gly-173–Asp-439 is transcriptional activation.

Interacts with YAP1 and WWTR1/TAZ. Expressed in embryos as well as in many adult tissues.

The protein resides in the nucleus. Its function is as follows. Transcription factor which plays a key role in the Hippo signaling pathway, a pathway involved in organ size control and tumor suppression by restricting proliferation and promoting apoptosis. The core of this pathway is composed of a kinase cascade wherein MST1/MST2, in complex with its regulatory protein SAV1, phosphorylates and activates LATS1/2 in complex with its regulatory protein MOB1, which in turn phosphorylates and inactivates YAP1 oncoprotein and WWTR1/TAZ. Acts by mediating gene expression of YAP1 and WWTR1/TAZ, thereby regulating cell proliferation, migration and epithelial mesenchymal transition (EMT) induction. This is Transcriptional enhancer factor TEF-5 (Tead3) from Mus musculus (Mouse).